Consider the following 65-residue polypeptide: MPKIKTVRGAAKRFKKTASGGFKRKRANLRHILTKKSTKRKRHLRPKGMVSKGDLGLVVACLPYA.

It belongs to the bacterial ribosomal protein bL35 family.

This chain is Large ribosomal subunit protein bL35, found in Photorhabdus laumondii subsp. laumondii (strain DSM 15139 / CIP 105565 / TT01) (Photorhabdus luminescens subsp. laumondii).